Consider the following 829-residue polypeptide: Ent-cassa-12,15-diene synthase (829 aa).

A disordered region spans residues 1-50; that stretch reads MMLLGSPSSGGYGGKFAGASPAGGTTTMAPSAKQPSSRAPPPGITGGRND. Residues 23 to 37 show a composition bias toward polar residues; it reads GGTTTMAPSAKQPSS. The Mg(2+) site is built by Asp-576, Asp-580, Asn-720, and Glu-728. Residues 576–580 carry the DDXXD motif motif; sequence DDLFD.

Belongs to the terpene synthase family. It depends on Mg(2+) as a cofactor. In terms of tissue distribution, expressed in roots and stems.

It catalyses the reaction ent-copalyl diphosphate = ent-cassa-12,15-diene + diphosphate. Functionally, involved in phytocassane phytoalexins biosynthesis. Catalyzes the conversion of ent-copalyl diphosphate to the phytoalexin precursor ent-cassa-12,15-diene. This is Ent-cassa-12,15-diene synthase (KSL7) from Oryza sativa subsp. japonica (Rice).